Reading from the N-terminus, the 330-residue chain is Inactive hydroxysteroid dehydrogenase-like protein 1 (330 aa).

An N-acetylalanine modification is found at A2. The interval 2-82 is required for mitochondria translocation; the sequence is AAVDSFYLLY…SGATDGIGRA (81 aa). Residues 74–80, D125, and K222 contribute to the NADP(+) site; that span reads GATDGIG.

This sequence belongs to the short-chain dehydrogenases/reductases (SDR) family. 17-beta-HSD 3 subfamily. In terms of assembly, interacts with STYXL1.

It is found in the mitochondrion. This Pongo abelii (Sumatran orangutan) protein is Inactive hydroxysteroid dehydrogenase-like protein 1 (HSDL1).